A 62-amino-acid polypeptide reads, in one-letter code: Large ribosomal subunit protein uL29 (62 aa).

This sequence belongs to the universal ribosomal protein uL29 family.

This Amoebophilus asiaticus (strain 5a2) protein is Large ribosomal subunit protein uL29.